Here is a 265-residue protein sequence, read N- to C-terminus: Tryptophan synthase alpha chain (265 aa).

Residues E45 and D56 each act as proton acceptor in the active site.

Belongs to the TrpA family. Tetramer of two alpha and two beta chains.

The catalysed reaction is (1S,2R)-1-C-(indol-3-yl)glycerol 3-phosphate + L-serine = D-glyceraldehyde 3-phosphate + L-tryptophan + H2O. The protein operates within amino-acid biosynthesis; L-tryptophan biosynthesis; L-tryptophan from chorismate: step 5/5. Its function is as follows. The alpha subunit is responsible for the aldol cleavage of indoleglycerol phosphate to indole and glyceraldehyde 3-phosphate. This Halalkalibacterium halodurans (strain ATCC BAA-125 / DSM 18197 / FERM 7344 / JCM 9153 / C-125) (Bacillus halodurans) protein is Tryptophan synthase alpha chain.